The sequence spans 530 residues: Cytochrome P450 monooxygenase apf7 (530 aa).

Residues 6-26 (VSPVSIWVFVIYAVTIIIAIY) form a helical membrane-spanning segment. N85 carries an N-linked (GlcNAc...) asparagine glycan. C464 provides a ligand contact to heme.

It belongs to the cytochrome P450 family. Requires heme as cofactor.

It localises to the membrane. It participates in secondary metabolite biosynthesis. In terms of biological role, cytochrome P450 monooxygenase; part of the gene cluster that mediates the biosynthesis of the cyclic tetrapeptide apicidin F (APF). The non-ribosomal peptide synthetase apf1 incorporates four different amino acids to produce apicidin F: L-phenylalanine, D-pipecolic acid (D-pip), N-methoxy-L-tryptophan and L-2-aminooctanedioic acid. L-Phenylalanine is the only proteinogenic amino acid directly used by apf1. The 3 other apf1 substrates are non-proteinogenic and have to be modified by other enzymes of the cluster. Lysine is converted to delta-1-pyrroline-5-carboxylate (P5C) which is reduced to L-pipecolic acid (L-pip) by apf3. L-pip is epimerized to D-pip, probably by apf1 activity, prior to incorporation. L-Tryptophan is N-oxidyzed by one of the cytochrome P450 monooxygenases (apf7 or apf8), and further methylated at the hydroxy group by the O-methyltransferase apf6 to yield N-methoxy-L-tryptophan. The synthesis of the fourth apf1 substrate is more complex. The fatty acid synthase apf5 is involved in the synthesis of the octanoic acid backbone of L-2-aminooctanedioic acid by fixing one acetyl-CoA unit and three malonyl-CoA units. Then one of the cytochrome P450 monooxygenases (apf7 or apf8) may oxidize this backbone to 2-oxooctanoic acid. The aminotransferase apf4 is predicted to catalyze the exchange of the keto group with an amino group. The next step would be the oxidation of 2-aminooctanoic acid by one of the cytochrome P450 monooxygenases (apf7 or apf8). The last step is the oxidation of 2-amino-8-hydroxyoctanoic acid to 2-aminooctanedioic acid is catalyzed by the FAD-dependent monooxygenase apf9. The polypeptide is Cytochrome P450 monooxygenase apf7 (Gibberella fujikuroi (strain CBS 195.34 / IMI 58289 / NRRL A-6831) (Bakanae and foot rot disease fungus)).